Here is a 561-residue protein sequence, read N- to C-terminus: Putative transport protein YbjL (561 aa).

5 helical membrane-spanning segments follow: residues 8 to 28, 32 to 52, 66 to 86, 94 to 114, and 158 to 178; these read LLNG…LCLG, LGSV…LLGQ, FMLF…SIFF, MLAL…GKLF, and NLSL…IVGA. 2 consecutive RCK C-terminal domains span residues 200–288 and 292–373; these read RGLD…SFRN and VFDR…RIGF. Helical transmembrane passes span 383–403, 406–426, 447–467, 475–495, and 540–560; these read LLAF…TFQF, FSFG…LGFL, FGLM…ISNG, MLIA…LFGA, and AIAN…WPGL.

It belongs to the AAE transporter (TC 2.A.81) family. YbjL subfamily.

It localises to the cell membrane. This chain is Putative transport protein YbjL, found in Salmonella dublin (strain CT_02021853).